The following is a 505-amino-acid chain: Actin nucleation-promoting factor WASL (505 aa).

Ser2 is modified (N-acetylserine). The WH1 domain occupies 34-141 (LGKKCVTMSS…KAVTDLLGRR (108 aa)). 2 disordered regions span residues 138-163 (LGRRQRKSEKRRDPPNGPNLPMATVD) and 184-205 (HTKEKKKGKAKKKRLTKADIGT). Basic residues predominate over residues 186 to 198 (KEKKKGKAKKKRL). Residues 203 to 216 (IGTPSNFQHIGHVG) form the CRIB domain. A Phosphoserine; by TNK2 modification is found at Ser242. Tyr256 bears the Phosphotyrosine; by FAK1 and TNK2 mark. The segment at 266 to 406 (EAVKNELRRQ…HQVPTTAGNK (141 aa)) is disordered. Pro residues-rich tracts occupy residues 276-364 (APPP…PPPS) and 371-391 (VAPPPPPPPPPPPGPPPPPGL). The residue at position 307 (Arg307) is an Omega-N-methylarginine. 2 consecutive WH2 domains span residues 405–422 (NKAALLDQIREGAQLKKV) and 433–450 (GRDALLDQIRQGIQLKSV). The interval 476–505 (QKRSKAIHSSDEDEDEDDEEDFEDDDEWED) is disordered. Phosphoserine occurs at positions 484 and 485. A compositionally biased stretch (acidic residues) spans 486 to 505 (DEDEDEDDEEDFEDDDEWED).

As to quaternary structure, binds actin and the Arp2/3 complex. Interacts with CDC42. Interacts with FCHSD1. Interacts with FCHSD2. Binds to SH3 domains of GRB2. Interacts with the C-terminal SH3 domain of DNMBP. Interacts with SNX9. Interacts with the WW domains of PRPF40A/FBP11. Interacts with PTK2/FAK1. Interacts with PACSIN1, PACSIN2 and PACSIN3. Interacts with NOSTRIN. Binds to TNK2. Interacts with SNX33. Interacts with NONO (via second RRM domain); the interaction is direct. Component of a multiprotein complex with NONO and SFPQ; associates with the complex via direct interaction with NONO. (Microbial infection) Interacts with E.coli effector protein EspF(U). Identified in a complex containing at least WASL, BAIAP2L1 and E.coli EspF(U). In terms of assembly, (Microbial infection) Interacts with Shigella flexneri protein IcsA. The interaction with IcsA enhances the affinity of WASL for Arp2/3, thus assembling a tight complex which has maximal activity in actin assembly. In terms of processing, phosphorylation at Ser-242, Tyr-256, Ser-484 and Ser-485 enhances actin polymerization activity.

The protein localises to the cytoplasm. Its subcellular location is the cytoskeleton. The protein resides in the nucleus. Regulates actin polymerization by stimulating the actin-nucleating activity of the Arp2/3 complex. Involved in various processes, such as mitosis and cytokinesis, via its role in the regulation of actin polymerization. Together with CDC42, involved in the extension and maintenance of the formation of thin, actin-rich surface projections called filopodia. In addition to its role in the cytoplasm, also plays a role in the nucleus by regulating gene transcription, probably by promoting nuclear actin polymerization. Binds to HSF1/HSTF1 and forms a complex on heat shock promoter elements (HSE) that negatively regulates HSP90 expression. Plays a role in dendrite spine morphogenesis. Decreasing levels of DNMBP (using antisense RNA) alters apical junction morphology in cultured enterocytes, junctions curve instead of being nearly linear. The protein is Actin nucleation-promoting factor WASL (WASL) of Homo sapiens (Human).